Here is a 216-residue protein sequence, read N- to C-terminus: Protein ORM2 (216 aa).

Residues 1-50 (MIDRTKNESPAFEESPLTPNVSNLKPFPSQSNKISTPVTDHRRRRSSSVI) are disordered. Residues 1–78 (MIDRTKNESP…NMNATWVDQR (78 aa)) lie on the Cytoplasmic side of the membrane. A phosphoserine mark is found at Ser9 and Ser15. The segment covering 17–38 (LTPNVSNLKPFPSQSNKISTPV) has biased composition (polar residues). A Phosphothreonine modification is found at Thr18. Ser22, Ser29, and Ser51 each carry phosphoserine. Residues 79-99 (GAWLIHIVVIVLLRLFYSLFG) traverse the membrane as a helical segment. Residues 100 to 103 (STPK) lie on the Extracellular side of the membrane. The helical transmembrane segment at 104-124 (WTWTLTNMTYIIGFYIMFHLV) threads the bilayer. The Cytoplasmic segment spans residues 125–148 (KGTPFDFNGGAYDNLTMWEQINDE). The chain crosses the membrane as a helical span at residues 149–169 (TLYTPTRKFLLIVPIVLFLIS). Residues 170–177 (NQYYRNDM) lie on the Extracellular side of the membrane. A helical transmembrane segment spans residues 178-198 (TLFLSNLAVTVLIGVVPKLGI). The Cytoplasmic segment spans residues 199–216 (THRLRISIPGITGRAQIS).

Belongs to the ORM family. In terms of assembly, component of the SPOTS complex, at least composed of LCB1/2 (LCB1 and/or LCB2), ORM1/2 (ORM1 and/or ORM2), SAC1 and TSC3. In terms of processing, phosphorylated in case of disruption of sphingolipid synthesis. Phosphorylation regulates the inhibitory activity of serine palmitoyltransferases (LCB1 and LCB2).

Its subcellular location is the endoplasmic reticulum membrane. Its function is as follows. Component of the SPOTS complex that acts as a negative regulator of sphingolipid synthesis. Acts by inhibiting serine palmitoyltransferases (LCB1 and LCB2) activity. Along with ORM1, plays a role in the phosphorylation of LAC1 and YPK1, the distribution of actin patches between mother and daughter cells, and in endocytosis. The chain is Protein ORM2 (ORM2) from Saccharomyces cerevisiae (strain ATCC 204508 / S288c) (Baker's yeast).